The chain runs to 201 residues: MINKAILGGTFDPIHNAHINVAYEALERFNLEEVIFIPAGNPPHKINLKKTPAHIRYEMVKLAIEKETRFSISDFEIKSKGLSYTYRTLKHFKEKEPETNWYFITGEDCLSYLEHWKYIDEIFNICNFVIFSREGFKEKEEIIKKKKSILLKYRKEILFMDASILDISSTKIRNRIKEGKEVSFYMPDKVYKFILQNNLYK.

It belongs to the NadD family.

It catalyses the reaction nicotinate beta-D-ribonucleotide + ATP + H(+) = deamido-NAD(+) + diphosphate. It functions in the pathway cofactor biosynthesis; NAD(+) biosynthesis; deamido-NAD(+) from nicotinate D-ribonucleotide: step 1/1. Functionally, catalyzes the reversible adenylation of nicotinate mononucleotide (NaMN) to nicotinic acid adenine dinucleotide (NaAD). The polypeptide is Probable nicotinate-nucleotide adenylyltransferase (Clostridium botulinum (strain Langeland / NCTC 10281 / Type F)).